The chain runs to 361 residues: Velvet complex subunit B (361 aa).

Disordered stretches follow at residues 1–44 (MYAI…GIPS) and 139–161 (SIST…TYAQ). Pro residues predominate over residues 10–26 (PPPPPPLSMDRIPPPSS). The 287-residue stretch at 54–340 (VHEGRIWSLQ…ALQGIKIPIR (287 aa)) folds into the Velvet domain.

Belongs to the velvet family. VelB subfamily. Component of the heterotrimeric velvet complex composed of laeA, veA and velB; VeA acting as a bridging protein between laeA and velB. Forms a heterodimeric complex with vosA; the formation of the velB-vosA complex is light-dependent.

The protein localises to the nucleus. Its subcellular location is the cytoplasm. Its function is as follows. Component of the velvet transcription factor complex that controls sexual/asexual developmental ratio in response to light, promoting sexual development in the darkness while stimulating asexual sporulation under illumination. The velvet complex acts as a global regulator for secondary metabolite gene expression. Component of the velB-VosA heterodimeric complex that plays a dual role in activating genes associated with spore maturation and repressing certain development-associated genes. The velB-VosA complex binds DNA through the DNA-binding domain of vosA that recognizes an 11-nucleotide consensus sequence 5'-CTGGCCGCGGC-3' consisting of two motifs in the promoters of key developmental regulatory genes. Controls the expression of the aflatoxin gene cluster. Likely coordinates with fluG to modulate sclerotial production. The protein is Velvet complex subunit B of Aspergillus flavus (strain ATCC 200026 / FGSC A1120 / IAM 13836 / NRRL 3357 / JCM 12722 / SRRC 167).